A 347-amino-acid polypeptide reads, in one-letter code: N-acetyl-gamma-glutamyl-phosphate reductase (347 aa).

Residue Cys-153 is part of the active site.

It belongs to the NAGSA dehydrogenase family. Type 1 subfamily.

It localises to the cytoplasm. The enzyme catalyses N-acetyl-L-glutamate 5-semialdehyde + phosphate + NADP(+) = N-acetyl-L-glutamyl 5-phosphate + NADPH + H(+). The protein operates within amino-acid biosynthesis; L-arginine biosynthesis; N(2)-acetyl-L-ornithine from L-glutamate: step 3/4. Its function is as follows. Catalyzes the NADPH-dependent reduction of N-acetyl-5-glutamyl phosphate to yield N-acetyl-L-glutamate 5-semialdehyde. The sequence is that of N-acetyl-gamma-glutamyl-phosphate reductase from Mycobacterium leprae (strain Br4923).